Reading from the N-terminus, the 397-residue chain is tRNA-specific 2-thiouridylase MnmA (397 aa).

ATP is bound by residues Ala19–Ser26 and Leu45. The active-site Nucleophile is the Cys113. The cysteines at positions 113 and 210 are disulfide-linked. Gly137 is a binding site for ATP. The interval Arg160–Gln162 is interaction with tRNA. The Cysteine persulfide intermediate role is filled by Cys210.

The protein belongs to the MnmA/TRMU family.

The protein localises to the cytoplasm. The catalysed reaction is S-sulfanyl-L-cysteinyl-[protein] + uridine(34) in tRNA + AH2 + ATP = 2-thiouridine(34) in tRNA + L-cysteinyl-[protein] + A + AMP + diphosphate + H(+). Catalyzes the 2-thiolation of uridine at the wobble position (U34) of tRNA, leading to the formation of s(2)U34. In Bradyrhizobium sp. (strain BTAi1 / ATCC BAA-1182), this protein is tRNA-specific 2-thiouridylase MnmA.